We begin with the raw amino-acid sequence, 35 residues long: Photosystem II reaction center protein T (35 aa).

The chain crosses the membrane as a helical span at residues 3-23; that stretch reads ALVYTFLLVSTLGILFFAIFF.

This sequence belongs to the PsbT family. PSII is composed of 1 copy each of membrane proteins PsbA, PsbB, PsbC, PsbD, PsbE, PsbF, PsbH, PsbI, PsbJ, PsbK, PsbL, PsbM, PsbT, PsbY, PsbZ, Psb30/Ycf12, at least 3 peripheral proteins of the oxygen-evolving complex and a large number of cofactors. It forms dimeric complexes.

The protein localises to the plastid. It localises to the chloroplast thylakoid membrane. Found at the monomer-monomer interface of the photosystem II (PS II) dimer, plays a role in assembly and dimerization of PSII. PSII is a light-driven water plastoquinone oxidoreductase, using light energy to abstract electrons from H(2)O, generating a proton gradient subsequently used for ATP formation. The polypeptide is Photosystem II reaction center protein T (Gnetum gnemon (Spanish joint-fir)).